Here is an 888-residue protein sequence, read N- to C-terminus: Glutamate receptor 3 (888 aa).

The N-terminal stretch at 1–22 is a signal peptide; sequence MGQSVLRAVFFLVLGLLGHSHG. The Extracellular segment spans residues 23 to 546; that stretch reads GFPNTISIGG…GVFSFLDPLA (524 aa). Residues Asn57, Asn260, Asn374, Asn409, and Asn416 are each glycosylated (N-linked (GlcNAc...) asparagine). A disulfide bridge links Cys85 with Cys334. Residues Pro502, Thr504, and Arg509 each contribute to the L-glutamate site. A helical membrane pass occupies residues 547 to 567; that stretch reads YEIWMCIVFAYIGVSVVLFLV. At 568 to 596 the chain is on the cytoplasmic side; it reads SRFSPYEWHLEDNNEEPRDPQSPPDPPNE. The helical; Pore-forming intramembrane region spans 597–612; that stretch reads FGIFNSLWFSLGAFMQ. The stretch at 613–615 is an intramembrane region; it reads QGC. A lipid anchor (S-palmitoyl cysteine) is attached at Cys615. At 616 to 621 the chain is on the cytoplasmic side; the sequence is DISPRS. A helical transmembrane segment spans residues 622–642; sequence LSGRIVGGVWWFFTLIIISSY. The Extracellular portion of the chain corresponds to 643–817; that stretch reads TANLAAFLTV…DKTSALSLSN (175 aa). Positions 680, 681, and 731 each coordinate L-glutamate. Cys744 and Cys799 are joined by a disulfide. Residues 818–838 form a helical membrane-spanning segment; it reads VAGVFYILVGGLGLAMMVALI. The Cytoplasmic segment spans residues 839 to 888; the sequence is EFCYKSRAESKRMKLTKNTQNFKPAPATNTQNYATYREGYNVYGTESVKI. Residue Cys841 is the site of S-palmitoyl cysteine attachment. Phosphotyrosine is present on residues Tyr871 and Tyr881.

It belongs to the glutamate-gated ion channel (TC 1.A.10.1) family. GRIA3 subfamily. In terms of assembly, homotetramer or heterotetramer of pore-forming glutamate receptor subunits. Tetramers may be formed by the dimerization of dimers. Interacts with PICK1, GRIP1 and GRIP2. Found in a complex with GRIA1, GRIA2, GRIA4, CNIH2, CNIH3, CACNG2, CACNG3, CACNG4, CACNG5, CACNG7 and CACNG8. Interacts with CACNG5. Found in a complex with GRIA1, GRIA2, GRIA4, DLG4, CACNG8 and CNIH2.

The protein resides in the cell membrane. It localises to the postsynaptic cell membrane. Its subcellular location is the postsynaptic density membrane. It catalyses the reaction Ca(2+)(in) = Ca(2+)(out). Functionally, ionotropic glutamate receptor that functions as a ligand-gated cation channel, gated by L-glutamate and glutamatergic agonists such as alpha-amino-3-hydroxy-5-methyl-4-isoxazolepropionic acid (AMPA), quisqualic acid, and kainic acid. L-glutamate acts as an excitatory neurotransmitter at many synapses in the central nervous system and plays an important role in fast excitatory synaptic transmission by inducing long-term potentiation. Binding of the excitatory neurotransmitter L-glutamate induces a conformation change, leading to the opening of the cation channel, and thereby converts the chemical signal to an electrical impulse upon entry of calcium. The receptor then desensitizes rapidly and enters a transient inactive state, characterized by the presence of bound agonist. In the presence of CACNG8, shows resensitization which is characterized by a delayed accumulation of current flux upon continued application of glutamate. The polypeptide is Glutamate receptor 3 (Rattus norvegicus (Rat)).